The following is a 289-amino-acid chain: Oxaloacetate decarboxylase (289 aa).

Residue S50 coordinates substrate. D88 contributes to the Mg(2+) binding site. Residues R159 and H235 each coordinate substrate.

It belongs to the isocitrate lyase/PEP mutase superfamily. Oxaloacetate decarboxylase family. As to quaternary structure, homotetramer; dimer of dimers. Mg(2+) serves as cofactor.

It carries out the reaction oxaloacetate + H(+) = pyruvate + CO2. In terms of biological role, catalyzes the decarboxylation of oxaloacetate into pyruvate. Seems to play a role in maintaining cellular concentrations of bicarbonate and pyruvate. The chain is Oxaloacetate decarboxylase from Pseudomonas syringae pv. tomato (strain ATCC BAA-871 / DC3000).